Reading from the N-terminus, the 118-residue chain is Large ribosomal subunit protein bL19 (118 aa).

This sequence belongs to the bacterial ribosomal protein bL19 family.

Its function is as follows. This protein is located at the 30S-50S ribosomal subunit interface and may play a role in the structure and function of the aminoacyl-tRNA binding site. The sequence is that of Large ribosomal subunit protein bL19 from Helicobacter pylori (strain G27).